A 1373-amino-acid chain; its full sequence is DNA-directed RNA polymerase subunit beta (1373 aa).

This sequence belongs to the RNA polymerase beta chain family. As to quaternary structure, the RNAP catalytic core consists of 2 alpha, 1 beta, 1 beta' and 1 omega subunit. When a sigma factor is associated with the core the holoenzyme is formed, which can initiate transcription.

It catalyses the reaction RNA(n) + a ribonucleoside 5'-triphosphate = RNA(n+1) + diphosphate. In terms of biological role, DNA-dependent RNA polymerase catalyzes the transcription of DNA into RNA using the four ribonucleoside triphosphates as substrates. The polypeptide is DNA-directed RNA polymerase subunit beta (Rickettsia conorii (strain ATCC VR-613 / Malish 7)).